The following is a 116-amino-acid chain: Venom protein 54.1 (116 aa).

A signal peptide spans 1 to 19 (MNFQVFSLIFFNFVYYCSC).

In terms of processing, contains 3 disulfide bonds. In terms of tissue distribution, expressed by the venom gland.

The protein resides in the secreted. The sequence is that of Venom protein 54.1 from Lychas mucronatus (Chinese swimming scorpion).